We begin with the raw amino-acid sequence, 470 residues long: Ribulose bisphosphate carboxylase large chain (470 aa).

Substrate contacts are provided by Asn-115 and Thr-165. Lys-167 serves as the catalytic Proton acceptor. Lys-169 provides a ligand contact to substrate. Mg(2+)-binding residues include Lys-193, Asp-195, and Glu-196. Lys-193 is subject to N6-carboxylysine. The Proton acceptor role is filled by His-286. Arg-287, His-319, and Ser-371 together coordinate substrate.

It belongs to the RuBisCO large chain family. Type I subfamily. As to quaternary structure, heterohexadecamer of 8 large chains and 8 small chains. Requires Mg(2+) as cofactor.

The protein resides in the carboxysome. It catalyses the reaction 2 (2R)-3-phosphoglycerate + 2 H(+) = D-ribulose 1,5-bisphosphate + CO2 + H2O. The enzyme catalyses D-ribulose 1,5-bisphosphate + O2 = 2-phosphoglycolate + (2R)-3-phosphoglycerate + 2 H(+). RuBisCO catalyzes two reactions: the carboxylation of D-ribulose 1,5-bisphosphate, the primary event in carbon dioxide fixation, as well as the oxidative fragmentation of the pentose substrate in the photorespiration process. Both reactions occur simultaneously and in competition at the same active site. The chain is Ribulose bisphosphate carboxylase large chain from Prochlorococcus marinus (strain NATL1A).